The sequence spans 391 residues: Chalcone synthase (391 aa).

Cys164 is an active-site residue.

It belongs to the thiolase-like superfamily. Chalcone/stilbene synthases family.

It carries out the reaction (E)-4-coumaroyl-CoA + 3 malonyl-CoA + 3 H(+) = 2',4,4',6'-tetrahydroxychalcone + 3 CO2 + 4 CoA. It participates in secondary metabolite biosynthesis; flavonoid biosynthesis. In terms of biological role, the primary product of this enzyme is 4,2',4',6'-tetrahydroxychalcone (also termed naringenin-chalcone or chalcone) which can under specific conditions spontaneously isomerize into naringenin. The sequence is that of Chalcone synthase (CHS) from Dianthus monspessulanus.